A 298-amino-acid polypeptide reads, in one-letter code: Inosose dehydratase (298 aa).

This sequence belongs to the IolE/MocC family. The cofactor is glutathione. Requires Co(2+) as cofactor. It depends on Mn(2+) as a cofactor.

The enzyme catalyses scyllo-inosose = 3D-3,5/4-trihydroxycyclohexane-1,2-dione + H2O. In terms of biological role, catalyzes the dehydration of inosose (2-keto-myo-inositol, 2KMI or 2,4,6/3,5-pentahydroxycyclohexanone) to 3D-(3,5/4)-trihydroxycyclohexane-1,2-dione (D-2,3-diketo-4-deoxy-epi-inositol). The sequence is that of Inosose dehydratase from Yersinia enterocolitica serotype O:8 / biotype 1B (strain NCTC 13174 / 8081).